A 403-amino-acid chain; its full sequence is Aromatic-L-amino-acid decarboxylase (403 aa).

T8 is a substrate binding site. A74 and S75 together coordinate pyridoxal 5'-phosphate. H118 is a binding site for substrate. The active site involves H118. 2 residues coordinate pyridoxal 5'-phosphate: D197 and N226. K229 is subject to N6-(pyridoxal phosphate)lysine. Residues 250–276 (NAFNVDPLYLKHDMQGSAPDYRHWQIP) are disordered.

The protein belongs to the group II decarboxylase family. In terms of assembly, homodimer. It depends on pyridoxal 5'-phosphate as a cofactor.

It carries out the reaction L-dopa + H(+) = dopamine + CO2. It catalyses the reaction 5-hydroxy-L-tryptophan + H(+) = serotonin + CO2. In terms of biological role, catalyzes the decarboxylation of L-3,4-dihydroxyphenylalanine (L-DOPA) to dopamine and L-5-hydroxytryptophan (5-HTP) to serotonin. Catalyzes the formation of serotonin more efficiently than dopamine. Displays no activity to tyrosine. Variation in the synthesis of bioamines may be a factor contributing to natural variation in life span. The protein is Aromatic-L-amino-acid decarboxylase (Ddc) of Drosophila lebanonensis (Fruit fly).